The sequence spans 240 residues: UDP-2,3-diacylglucosamine hydrolase (240 aa).

Mn(2+) contacts are provided by aspartate 8, histidine 10, aspartate 41, asparagine 79, and histidine 114. 79-80 lines the substrate pocket; it reads NR. Substrate is bound by residues aspartate 122, serine 160, asparagine 164, lysine 167, and histidine 195. Positions 195 and 197 each coordinate Mn(2+).

The protein belongs to the LpxH family. Requires Mn(2+) as cofactor.

The protein localises to the cell inner membrane. It catalyses the reaction UDP-2-N,3-O-bis[(3R)-3-hydroxytetradecanoyl]-alpha-D-glucosamine + H2O = 2-N,3-O-bis[(3R)-3-hydroxytetradecanoyl]-alpha-D-glucosaminyl 1-phosphate + UMP + 2 H(+). It functions in the pathway glycolipid biosynthesis; lipid IV(A) biosynthesis; lipid IV(A) from (3R)-3-hydroxytetradecanoyl-[acyl-carrier-protein] and UDP-N-acetyl-alpha-D-glucosamine: step 4/6. Its function is as follows. Hydrolyzes the pyrophosphate bond of UDP-2,3-diacylglucosamine to yield 2,3-diacylglucosamine 1-phosphate (lipid X) and UMP by catalyzing the attack of water at the alpha-P atom. Involved in the biosynthesis of lipid A, a phosphorylated glycolipid that anchors the lipopolysaccharide to the outer membrane of the cell. The chain is UDP-2,3-diacylglucosamine hydrolase from Salmonella agona (strain SL483).